The following is a 293-amino-acid chain: Bifunctional protein FolD 1 (293 aa).

NADP(+) contacts are provided by residues 174-176 and threonine 240; that span reads GRS.

This sequence belongs to the tetrahydrofolate dehydrogenase/cyclohydrolase family. Homodimer.

The catalysed reaction is (6R)-5,10-methylene-5,6,7,8-tetrahydrofolate + NADP(+) = (6R)-5,10-methenyltetrahydrofolate + NADPH. It carries out the reaction (6R)-5,10-methenyltetrahydrofolate + H2O = (6R)-10-formyltetrahydrofolate + H(+). It participates in one-carbon metabolism; tetrahydrofolate interconversion. Catalyzes the oxidation of 5,10-methylenetetrahydrofolate to 5,10-methenyltetrahydrofolate and then the hydrolysis of 5,10-methenyltetrahydrofolate to 10-formyltetrahydrofolate. This chain is Bifunctional protein FolD 1, found in Saccharopolyspora erythraea (strain ATCC 11635 / DSM 40517 / JCM 4748 / NBRC 13426 / NCIMB 8594 / NRRL 2338).